A 425-amino-acid chain; its full sequence is Enolase (425 aa).

(2R)-2-phosphoglycerate is bound at residue Q162. E204 (proton donor) is an active-site residue. Residues D241, E282, and D309 each coordinate Mg(2+). 4 residues coordinate (2R)-2-phosphoglycerate: K334, R363, S364, and K385. K334 serves as the catalytic Proton acceptor.

This sequence belongs to the enolase family. The cofactor is Mg(2+).

It localises to the cytoplasm. Its subcellular location is the secreted. The protein localises to the cell surface. The enzyme catalyses (2R)-2-phosphoglycerate = phosphoenolpyruvate + H2O. The protein operates within carbohydrate degradation; glycolysis; pyruvate from D-glyceraldehyde 3-phosphate: step 4/5. In terms of biological role, catalyzes the reversible conversion of 2-phosphoglycerate (2-PG) into phosphoenolpyruvate (PEP). It is essential for the degradation of carbohydrates via glycolysis. This Corynebacterium urealyticum (strain ATCC 43042 / DSM 7109) protein is Enolase.